The sequence spans 240 residues: Citrate synthase-lysine N-methyltransferase CSKMT, mitochondrial (240 aa).

The N-terminal 28 residues, 1–28 (MAALRRMLHLPSLMMGTCRPFAGSLADS), are a transit peptide targeting the mitochondrion.

It belongs to the methyltransferase superfamily.

It localises to the mitochondrion. It carries out the reaction L-lysyl-[citrate synthase] + S-adenosyl-L-methionine = N(6)-methyl-L-lysyl-[citrate synthase] + S-adenosyl-L-homocysteine + H(+). It catalyses the reaction N(6)-methyl-L-lysyl-[citrate synthase] + S-adenosyl-L-methionine = N(6),N(6)-dimethyl-L-lysyl-[citrate synthase] + S-adenosyl-L-homocysteine + H(+). The enzyme catalyses N(6),N(6)-dimethyl-L-lysyl-[citrate synthase] + S-adenosyl-L-methionine = N(6),N(6),N(6)-trimethyl-L-lysyl-[citrate synthase] + S-adenosyl-L-homocysteine + H(+). With respect to regulation, citrate synthase-lysine methyltransferase activity is inhibited by S-adenosylhomocysteine (AdoHcy) and oxaloacetate (OAA). In terms of biological role, protein-lysine methyltransferase that selectively trimethylates citrate synthase (CS) in mitochondria. Seems to conduct trimethylation in a highly distributive manner rather than in a processive manner, and thus introduces a single methyl group per binding event. In Homo sapiens (Human), this protein is Citrate synthase-lysine N-methyltransferase CSKMT, mitochondrial.